The sequence spans 403 residues: 8-amino-7-oxononanoate synthase (403 aa).

Arginine 30 contacts substrate. 121–122 (GY) is a pyridoxal 5'-phosphate binding site. Residue histidine 146 coordinates substrate. Pyridoxal 5'-phosphate contacts are provided by serine 192, histidine 220, and threonine 248. Lysine 251 carries the N6-(pyridoxal phosphate)lysine modification. Position 367 (threonine 367) interacts with substrate.

Belongs to the class-II pyridoxal-phosphate-dependent aminotransferase family. BioF subfamily. In terms of assembly, homodimer. Pyridoxal 5'-phosphate serves as cofactor.

It catalyses the reaction 6-carboxyhexanoyl-[ACP] + L-alanine + H(+) = (8S)-8-amino-7-oxononanoate + holo-[ACP] + CO2. It participates in cofactor biosynthesis; biotin biosynthesis. Functionally, catalyzes the decarboxylative condensation of pimeloyl-[acyl-carrier protein] and L-alanine to produce 8-amino-7-oxononanoate (AON), [acyl-carrier protein], and carbon dioxide. The sequence is that of 8-amino-7-oxononanoate synthase from Burkholderia vietnamiensis (strain G4 / LMG 22486) (Burkholderia cepacia (strain R1808)).